Consider the following 598-residue polypeptide: Glutamyl-tRNA(Gln) amidotransferase subunit E (598 aa).

It belongs to the GatB/GatE family. GatE subfamily. In terms of assembly, heterodimer of GatD and GatE.

The enzyme catalyses L-glutamyl-tRNA(Gln) + L-glutamine + ATP + H2O = L-glutaminyl-tRNA(Gln) + L-glutamate + ADP + phosphate + H(+). Its function is as follows. Allows the formation of correctly charged Gln-tRNA(Gln) through the transamidation of misacylated Glu-tRNA(Gln) in organisms which lack glutaminyl-tRNA synthetase. The reaction takes place in the presence of glutamine and ATP through an activated gamma-phospho-Glu-tRNA(Gln). The GatDE system is specific for glutamate and does not act on aspartate. The chain is Glutamyl-tRNA(Gln) amidotransferase subunit E from Thermoplasma volcanium (strain ATCC 51530 / DSM 4299 / JCM 9571 / NBRC 15438 / GSS1).